The sequence spans 188 residues: ATP-dependent Clp protease proteolytic subunit 1 (188 aa).

Ser90 acts as the Nucleophile in catalysis. His115 is an active-site residue.

It belongs to the peptidase S14 family. Fourteen ClpP subunits assemble into 2 heptameric rings which stack back to back to give a disk-like structure with a central cavity, resembling the structure of eukaryotic proteasomes.

It localises to the cytoplasm. The catalysed reaction is Hydrolysis of proteins to small peptides in the presence of ATP and magnesium. alpha-casein is the usual test substrate. In the absence of ATP, only oligopeptides shorter than five residues are hydrolyzed (such as succinyl-Leu-Tyr-|-NHMec, and Leu-Tyr-Leu-|-Tyr-Trp, in which cleavage of the -Tyr-|-Leu- and -Tyr-|-Trp bonds also occurs).. Functionally, cleaves peptides in various proteins in a process that requires ATP hydrolysis. Has a chymotrypsin-like activity. Plays a major role in the degradation of misfolded proteins. This chain is ATP-dependent Clp protease proteolytic subunit 1, found in Corynebacterium jeikeium (strain K411).